The primary structure comprises 118 residues: MTPLLTLFLVVLMGLPLAPVQALDCHVCAYNGDNCFNPMRCPAMVAYCMTTRTYYTPTRMKVSKSCVPSCFETVYDGYSKHASTTSCCQYDLCNSAGLAIPATLALAPVLLATLWGLL.

The N-terminal stretch at 1 to 22 is a signal peptide; the sequence is MTPLLTLFLVVLMGLPLAPVQA. Positions 23-107 constitute a UPAR/Ly6 domain; the sequence is LDCHVCAYNG…LAIPATLALA (85 aa). Intrachain disulfides connect Cys-25–Cys-48, Cys-28–Cys-35, Cys-41–Cys-66, Cys-70–Cys-87, and Cys-88–Cys-93. Residue Ser-95 is the site of GPI-anchor amidated serine attachment. A propeptide spans 96–118 (removed in mature form); sequence AGLAIPATLALAPVLLATLWGLL.

As to quaternary structure, interacts with nAChRs containing alpha-4:beta-2 (CHRNA4:CHRNB2) and alpha-7 (CHRNA7) subunits. Interacts with CHRNA4 probably in the endoplasmic reticulum prior to nAChR pentameric assembly. Interacts with KCNA2/Potassium voltage-gated channel subfamily A member 2. In terms of tissue distribution, expressed in lung predominantly in airway epithelial cells, submucous glands, and smooth muscle cells, in endothelial and smooth muscle cells in vessel walls and in alveolar type II cells (at protein level). Also expressed in brain.

Its subcellular location is the cell membrane. It localises to the cell projection. It is found in the dendrite. The protein resides in the endoplasmic reticulum. Acts in different tissues through interaction to nicotinic acetylcholine receptors (nAChRs). The proposed role as modulator of nAChR activity seems to be dependent on the nAChR subtype and stoichiometry, and to involve an effect on nAChR trafficking and its cell surface expression, and on single channel properties of the nAChR inserted in the plasma membrane. Modulates functional properties of nicotinic acetylcholine receptors (nAChRs) to prevent excessive excitation, and hence neurodegeneration. Enhances desensitization by increasing both the rate and extent of desensitization of alpha-4:beta-2-containing nAChRs and slowing recovery from desensitization. Promotes large amplitude ACh-evoked currents through alpha-4:beta-2 nAChRs. Is involved in regulation of the nAChR pentameric assembly in the endoplasmic reticulum. Shifts stoichiometry from high sensitivity alpha-4(2):beta-2(3) to low sensitivity alpha-4(3):beta-2(2) nAChR. In vitro modulates alpha-3:beta-4-containing nAChRs. Reduces cell surface expression of (alpha-3:beta-4)(2):beta-4 and (alpha-3:beta-4)(2):alpha-5 nAChRs suggesting an interaction with nAChR alpha-3(-):(+)beta-4 subunit interfaces and an allosteric mode. Corresponding single channel effects characterized by decreased unitary conductance, altered burst proportions and enhanced desensitization/inactivation seem to depend on nAChR alpha:alpha subunit interfaces and are greater in (alpha-3:beta-2)(2):alpha-3 when compared to (alpha-3:beta-2)(2):alpha-5 nAChRs. Prevents plasticity in the primary visual cortex late in life. This is Ly-6/neurotoxin-like protein 1 from Macaca mulatta (Rhesus macaque).